The following is a 665-amino-acid chain: Cysteine-rich receptor-like protein kinase 26 (665 aa).

The first 22 residues, 1–22 (MLSLLLPLISLLFQIQCFTVKS), serve as a signal peptide directing secretion. Residues 23 to 283 (QPVPLNQICS…GDKNRGVPKA (261 aa)) lie on the Extracellular side of the membrane. Gnk2-homologous domains lie at 26 to 129 (PLNQ…NRTI) and 135 to 244 (ISPH…PWRF). N-linked (GlcNAc...) asparagine glycosylation is found at asparagine 33, asparagine 37, asparagine 67, asparagine 126, asparagine 146, and asparagine 266. Residues 251–275 (DDPSSVPATPSRPPKNETRSVTQGD) are disordered. Residues 284-304 (LIFASASVAIVVLFIVLLVVF) form a helical membrane-spanning segment. The Cytoplasmic segment spans residues 305 to 665 (LKLRRKENIR…YNSNTELYPR (361 aa)). The Protein kinase domain occupies 344–624 (FSLENKLGEG…VLMLDGHTIA (281 aa)). ATP is bound by residues 350-358 (LGEGGFGAV) and lysine 372. The residue at position 417 (tyrosine 417) is a Phosphotyrosine. The Proton acceptor role is filled by aspartate 469. Residue serine 473 is modified to Phosphoserine. Threonine 510 is subject to Phosphothreonine. At tyrosine 518 the chain carries Phosphotyrosine. The segment at 641–665 (SDSSSSLGHNAKTSNYNSNTELYPR) is disordered. Positions 647–665 (LGHNAKTSNYNSNTELYPR) are enriched in polar residues.

The protein belongs to the protein kinase superfamily. Ser/Thr protein kinase family. CRK subfamily.

It is found in the membrane. It catalyses the reaction L-seryl-[protein] + ATP = O-phospho-L-seryl-[protein] + ADP + H(+). The enzyme catalyses L-threonyl-[protein] + ATP = O-phospho-L-threonyl-[protein] + ADP + H(+). The chain is Cysteine-rich receptor-like protein kinase 26 (CRK26) from Arabidopsis thaliana (Mouse-ear cress).